Consider the following 79-residue polypeptide: MSPYSGSVRRLLDSWPGKKRFGVYRFLPLFFLLGAGLEFSMINWTVGETNFYRTFKRRQAKNYVEEQQHLQARAANNTN.

The Mitochondrial matrix segment spans residues 1 to 20; that stretch reads MSPYSGSVRRLLDSWPGKKR. A helical membrane pass occupies residues 21–43; the sequence is FGVYRFLPLFFLLGAGLEFSMIN. Over 44–79 the chain is Mitochondrial intermembrane; the sequence is WTVGETNFYRTFKRRQAKNYVEEQQHLQARAANNTN.

This sequence belongs to the UQCC5 family. In terms of assembly, interacts with respiratory complex III components Uqcc1 and RFeSP; the interactions are probably involved in the assembly and stability of the mitochondrial ubiquinol-cytochrome c reductase complex. Interacts with sloth2; the interaction stabilizes both components. As to expression, expressed in the brain.

It localises to the mitochondrion inner membrane. The protein localises to the mitochondrion. Required for the assembly and stability of the mitochondrial ubiquinol-cytochrome c reductase complex (complex III (CIII) or cytochrome b-c1 complex), a multisubunit transmembrane complex that is part of the mitochondrial electron transport chain (ETC) which drives oxidative phosphorylation. The polypeptide is Ubiquinol-cytochrome c reductase complex assembly factor 5 (Drosophila melanogaster (Fruit fly)).